A 115-amino-acid chain; its full sequence is MGTSLLCWVVLGFLGTDHTGAGVSQSPRYKVTKRGQDVALRCDPISGHVSLYWYRQALGQGPEFLTYFNYEAQQDKSGLPNDRFSAERPEGSISTLTIQRTEQRDSAMYRCASSL.

The signal sequence occupies residues 1 to 21 (MGTSLLCWVVLGFLGTDHTGA). The Ig-like domain maps to 22–115 (GVSQSPRYKV…SAMYRCASSL (94 aa)). C42 and C111 form a disulfide bridge.

As to quaternary structure, alpha-beta TR is a heterodimer composed of an alpha and beta chain; disulfide-linked. The alpha-beta TR is associated with the transmembrane signaling CD3 coreceptor proteins to form the TR-CD3 (TcR or TCR). The assembly of alpha-beta TR heterodimers with CD3 occurs in the endoplasmic reticulum where a single alpha-beta TR heterodimer associates with one CD3D-CD3E heterodimer, one CD3G-CD3E heterodimer and one CD247 homodimer forming a stable octameric structure. CD3D-CD3E and CD3G-CD3E heterodimers preferentially associate with TR alpha and TR beta chains, respectively. The association of the CD247 homodimer is the last step of TcR assembly in the endoplasmic reticulum and is required for transport to the cell surface.

The protein localises to the cell membrane. V region of the variable domain of T cell receptor (TR) beta chain that participates in the antigen recognition. Alpha-beta T cell receptors are antigen specific receptors which are essential to the immune response and are present on the cell surface of T lymphocytes. Recognize peptide-major histocompatibility (MH) (pMH) complexes that are displayed by antigen presenting cells (APC), a prerequisite for efficient T cell adaptive immunity against pathogens. Binding of alpha-beta TR to pMH complex initiates TR-CD3 clustering on the cell surface and intracellular activation of LCK that phosphorylates the ITAM motifs of CD3G, CD3D, CD3E and CD247 enabling the recruitment of ZAP70. In turn ZAP70 phosphorylates LAT, which recruits numerous signaling molecules to form the LAT signalosome. The LAT signalosome propagates signal branching to three major signaling pathways, the calcium, the mitogen-activated protein kinase (MAPK) kinase and the nuclear factor NF-kappa-B (NF-kB) pathways, leading to the mobilization of transcription factors that are critical for gene expression and essential for T cell growth and differentiation. The T cell repertoire is generated in the thymus, by V-(D)-J rearrangement. This repertoire is then shaped by intrathymic selection events to generate a peripheral T cell pool of self-MH restricted, non-autoaggressive T cells. Post-thymic interaction of alpha-beta TR with the pMH complexes shapes TR structural and functional avidity. The polypeptide is T cell receptor beta variable 7-6 (Homo sapiens (Human)).